A 178-amino-acid chain; its full sequence is Putative peroxiredoxin in rubredoxin operon (178 aa).

In terms of domain architecture, Thioredoxin spans 3-163 (RLVGKPAPEF…TLRVLKAFQT (161 aa)). Cysteine 50 serves as the catalytic Cysteine sulfenic acid (-SOH) intermediate.

This sequence belongs to the peroxiredoxin family. AhpC/Prx1 subfamily. Homodimer; disulfide-linked, upon oxidation.

The protein resides in the cytoplasm. It carries out the reaction a hydroperoxide + [protein]-dithiol = [protein]-disulfide + an alcohol + H2O. Its function is as follows. Thiol-specific peroxidase that catalyzes the reduction of hydrogen peroxide and organic hydroperoxides to water and alcohols, respectively. Plays a role in cell protection against oxidative stress by detoxifying peroxides. The sequence is that of Putative peroxiredoxin in rubredoxin operon from Clostridium pasteurianum.